We begin with the raw amino-acid sequence, 537 residues long: ATP synthase subunit beta (537 aa).

A disordered region spans residues 1–61 (MAKAATSKKE…SSPQKGGKKG (61 aa)). Positions 7–18 (SKKEASKVEAKK) are enriched in basic and acidic residues. Residues 44-55 (NSPSRTGSSSPQ) are compositionally biased toward polar residues. An ATP-binding site is contributed by 209–216 (GGAGVGKT).

This sequence belongs to the ATPase alpha/beta chains family. As to quaternary structure, F-type ATPases have 2 components, CF(1) - the catalytic core - and CF(0) - the membrane proton channel. CF(1) has five subunits: alpha(3), beta(3), gamma(1), delta(1), epsilon(1). CF(0) has three main subunits: a(1), b(2) and c(9-12). The alpha and beta chains form an alternating ring which encloses part of the gamma chain. CF(1) is attached to CF(0) by a central stalk formed by the gamma and epsilon chains, while a peripheral stalk is formed by the delta and b chains.

It is found in the cell inner membrane. The catalysed reaction is ATP + H2O + 4 H(+)(in) = ADP + phosphate + 5 H(+)(out). Produces ATP from ADP in the presence of a proton gradient across the membrane. The catalytic sites are hosted primarily by the beta subunits. This chain is ATP synthase subunit beta, found in Bartonella bacilliformis (strain ATCC 35685 / KC583 / Herrer 020/F12,63).